The primary structure comprises 1895 residues: 1,3-beta-glucan synthase component GSC2 (1895 aa).

Polar residues-rich tracts occupy residues 1–16 (MSYNDPNLNGQYYSNG) and 25–34 (PTYQVTQDQS). 2 disordered regions span residues 1–143 (MSYN…PYGN) and 269–292 (ARKAKKKNKKAMQEASPEDTEETL). The Extracellular portion of the chain corresponds to 1-473 (MSYNDPNLNG…WLHLVTNFNR (473 aa)). Over residues 65–78 (QFPQGQDPSQDQGP) the composition is skewed to low complexity. Composition is skewed to polar residues over residues 79-107 (YNNDASYYNQPPNMMNPSSQDGENFSDFS) and 115-141 (TYPNDQYTPSQMSYPDQDGSSGASTPY). Over residues 269 to 278 (ARKAKKKNKK) the composition is skewed to basic residues. Lysine 278 participates in a covalent cross-link: Glycyl lysine isopeptide (Lys-Gly) (interchain with G-Cter in ubiquitin). A phosphothreonine mark is found at threonine 288 and threonine 291. Lysine 405 is covalently cross-linked (Glycyl lysine isopeptide (Lys-Gly) (interchain with G-Cter in ubiquitin)). Residues 474–494 (IWIMHISVYWMYCAYNAPTFY) traverse the membrane as a helical segment. At 495–511 (THNYQQLVDNQPLAAYK) the chain is on the cytoplasmic side. A helical transmembrane segment spans residues 512 to 532 (WATAALGGTVASLIQVAATLC). At 533 to 550 (EWSFVPRKWAGAQHLSRR) the chain is on the extracellular side. A helical transmembrane segment spans residues 551-571 (FWFLCVIMGINLGPVIFVFAY). Residues 572 to 582 (DKDTVYSTAAH) are Cytoplasmic-facing. The helical transmembrane segment at 583–603 (VVGAVMFFVAVATLVFFSVMP) threads the bilayer. Over 604-1579 (LGGLFTSYMK…DASRAHRTNL (976 aa)) the chain is Extracellular. Residues lysine 929, lysine 934, lysine 1558, and lysine 1566 each participate in a glycyl lysine isopeptide (Lys-Gly) (interchain with G-Cter in ubiquitin) cross-link. The helical transmembrane segment at 1580–1600 (IMAEIIPCAIYAAGCFIAFTF) threads the bilayer. At 1601–1620 (INAQTGVKTTDEDRVNSTLR) the chain is on the cytoplasmic side. Residues 1621-1641 (IIICTLAPIVIDIGVLFFCMG) form a helical membrane-spanning segment. Over 1642–1758 (LSCCSGPLLG…LTAKVIELSE (117 aa)) the chain is Extracellular. A helical transmembrane segment spans residues 1759 to 1779 (FAADFVLGHVILIFQLPVICI). Topologically, residues 1780–1821 (PKIDKFHSIMLFWLKPSRQIRPPIYSLKQARLRKRMVRRYCS) are cytoplasmic. A helical transmembrane segment spans residues 1822–1842 (LYFLVLIIFAGCIVGPAVASA). At 1843–1895 (HVPKDLGSGLTGTFHNLVQPRNVSNNDTGSQMSTYKSHYYTHTPSLKTWSTIK) the chain is on the extracellular side.

It belongs to the glycosyltransferase 48 family. Component of the 1,3-beta-glucan synthase (GS) complex, composed of two alternate catalytic subunits FKS1 or GSC2, and a regulatory subunit RHO1. Interacts with SMK1.

Its subcellular location is the membrane. It carries out the reaction [(1-&gt;3)-beta-D-glucosyl](n) + UDP-alpha-D-glucose = [(1-&gt;3)-beta-D-glucosyl](n+1) + UDP + H(+). Functionally, alternate catalytic subunit of the 1,3-beta-glucan synthase (GS) complex. Synthesizes 1,3-beta-glucan, a major structural component of the yeast cell wall. Required for spore wall assembly. Negative regulation of activity by SMK1 is important for spore wall deposition. Activity is positively regulated by RHO1. The sequence is that of 1,3-beta-glucan synthase component GSC2 from Saccharomyces cerevisiae (strain ATCC 204508 / S288c) (Baker's yeast).